The following is a 500-amino-acid chain: ATP synthase subunit alpha (500 aa).

G169–T176 contacts ATP.

It belongs to the ATPase alpha/beta chains family. F-type ATPases have 2 components, CF(1) - the catalytic core - and CF(0) - the membrane proton channel. CF(1) has five subunits: alpha(3), beta(3), gamma(1), delta(1), epsilon(1). CF(0) has three main subunits: a(1), b(2) and c(9-12). The alpha and beta chains form an alternating ring which encloses part of the gamma chain. CF(1) is attached to CF(0) by a central stalk formed by the gamma and epsilon chains, while a peripheral stalk is formed by the delta and b chains.

The protein localises to the cell membrane. The enzyme catalyses ATP + H2O + 4 H(+)(in) = ADP + phosphate + 5 H(+)(out). Functionally, produces ATP from ADP in the presence of a proton gradient across the membrane. The alpha chain is a regulatory subunit. This chain is ATP synthase subunit alpha, found in Lactococcus lactis subsp. cremoris (strain MG1363).